The sequence spans 394 residues: Probable fatty acyl-CoA transferase Rv3272 (394 aa).

D175 serves as the catalytic Nucleophile.

The protein belongs to the CoA-transferase III family. In terms of assembly, homodimer.

Probably involved in fatty acid metabolism. Binds to fatty acyl-CoAs of varying carbon chain lengths, with the highest binding affinity for palmitoyl-CoA (C16:0). In vitro, alters the cell wall lipid profile and protects mycobacteria from acidic, oxidative and antibiotic stress. May play a significant role in host-pathogen interaction. This chain is Probable fatty acyl-CoA transferase Rv3272, found in Mycobacterium tuberculosis (strain ATCC 25618 / H37Rv).